The sequence spans 251 residues: Cell division protein ZapD (251 aa).

The protein belongs to the ZapD family. As to quaternary structure, interacts with FtsZ.

It is found in the cytoplasm. Functionally, cell division factor that enhances FtsZ-ring assembly. Directly interacts with FtsZ and promotes bundling of FtsZ protofilaments, with a reduction in FtsZ GTPase activity. The protein is Cell division protein ZapD of Burkholderia cenocepacia (strain ATCC BAA-245 / DSM 16553 / LMG 16656 / NCTC 13227 / J2315 / CF5610) (Burkholderia cepacia (strain J2315)).